The primary structure comprises 452 residues: Probable M18 family aminopeptidase 1 (452 aa).

Residues histidine 93, histidine 168, and histidine 427 each coordinate Zn(2+).

The protein belongs to the peptidase M18 family. It depends on Zn(2+) as a cofactor.

This chain is Probable M18 family aminopeptidase 1 (apeA), found in Thermotoga neapolitana.